The sequence spans 270 residues: Hematopoietically-expressed homeobox protein HHEX (270 aa).

The segment at 1 to 137 is interaction with SOX13; the sequence is MQYPHPGPAA…PFLQRPLHKR (137 aa). Ser53 bears the Phosphoserine mark. Positions 137-196 form a DNA-binding region, homeobox; it reads RKGGQVRFSNDQTIELEKKFETQKYLSPPERKRLAKMLQLSERQVKTWFQNRRAKWRRLK. A required for WNT signaling induction region spans residues 137 to 270; it reads RKGGQVRFSN…EGDKSYFNAG (134 aa). Residues 194–270 form a disordered region; it reads RLKQENPQSN…EGDKSYFNAG (77 aa). Polar residues predominate over residues 222-241; the sequence is PSEQNKGASLDSSQCSPSPA. Positions 244 to 260 are enriched in acidic residues; sequence EDLESEISEDSDQEVDI.

As to quaternary structure, interacts with CD81; the interaction prevents nuclear translocation of HHEX. Interacts (via N-terminus) with SOX13; abolishes the SOX13-mediated inhibition of WNT-mediated transcriptional activity via competitive inhibition of the SOX13-TCF7 complex. Interacts with EIF4E; the interaction inhibits EIF4E-mediated mRNA nuclear export. In terms of tissue distribution, liver and promyelocytic leukemia cell line HL-60.

Its subcellular location is the nucleus. It localises to the nuclear body. The protein resides in the cytoplasm. Functionally, recognizes the DNA sequence 5'-ATTAA-3'. Transcriptional repressor. Activator of WNT-mediated transcription in conjunction with CTNNB1. Establishes anterior identity at two levels; acts early to enhance canonical WNT-signaling by repressing expression of TLE4, and acts later to inhibit NODAL-signaling by directly targeting NODAL. Inhibits EIF4E-mediated mRNA nuclear export. May play a role in hematopoietic differentiation. The protein is Hematopoietically-expressed homeobox protein HHEX (HHEX) of Homo sapiens (Human).